The chain runs to 197 residues: Nucleoid occlusion factor SlmA (197 aa).

The 61-residue stretch at 7–67 folds into the HTH tetR-type domain; that stretch reads INRREHILQC…GLIEFIEESL (61 aa). Positions 30 to 49 form a DNA-binding region, H-T-H motif; that stretch reads TTAKLASEVGVSEAALYRHF.

The protein belongs to the nucleoid occlusion factor SlmA family. Homodimer. Interacts with FtsZ.

Its subcellular location is the cytoplasm. It is found in the nucleoid. Functionally, required for nucleoid occlusion (NO) phenomenon, which prevents Z-ring formation and cell division over the nucleoid. Acts as a DNA-associated cell division inhibitor that binds simultaneously chromosomal DNA and FtsZ, and disrupts the assembly of FtsZ polymers. SlmA-DNA-binding sequences (SBS) are dispersed on non-Ter regions of the chromosome, preventing FtsZ polymerization at these regions. This chain is Nucleoid occlusion factor SlmA, found in Shewanella sp. (strain MR-7).